Here is a 457-residue protein sequence, read N- to C-terminus: Chromosomal replication initiator protein DnaA (457 aa).

The segment at 1 to 75 (MDAQLNNLWE…ALKIVTSRKF (75 aa)) is domain I, interacts with DnaA modulators. Residues 75-118 (FKIEFYLESDLEEEKENEEKQKEEKKENTNDVDGSIVVSDEMSA) form a domain II region. The domain III, AAA+ region stretch occupies residues 119–335 (TLNPKYTFQS…GALIRIIAYS (217 aa)). Residues Gly-163, Gly-165, Lys-166, and Thr-167 each coordinate ATP. Residues 336–457 (SLTNRDVSVD…NDITKKLTQK (122 aa)) are domain IV, binds dsDNA.

This sequence belongs to the DnaA family. In terms of assembly, oligomerizes as a right-handed, spiral filament on DNA at oriC.

Its subcellular location is the cytoplasm. Plays an essential role in the initiation and regulation of chromosomal replication. ATP-DnaA binds to the origin of replication (oriC) to initiate formation of the DNA replication initiation complex once per cell cycle. Binds the DnaA box (a 9 base pair repeat at the origin) and separates the double-stranded (ds)DNA. Forms a right-handed helical filament on oriC DNA; dsDNA binds to the exterior of the filament while single-stranded (ss)DNA is stabiized in the filament's interior. The ATP-DnaA-oriC complex binds and stabilizes one strand of the AT-rich DNA unwinding element (DUE), permitting loading of DNA polymerase. After initiation quickly degrades to an ADP-DnaA complex that is not apt for DNA replication. Binds acidic phospholipids. This Clostridium perfringens (strain ATCC 13124 / DSM 756 / JCM 1290 / NCIMB 6125 / NCTC 8237 / Type A) protein is Chromosomal replication initiator protein DnaA.